The chain runs to 786 residues: Polyribonucleotide nucleotidyltransferase (786 aa).

Positions 516 and 522 each coordinate Mg(2+). A KH domain is found at 582–641 (PRVTTVKIPVDKIGMVIGPKGQTINAIQDETGAEISIEDDGTIYVGATNGPSAQAAVERV). The S1 motif domain maps to 653-722 (GDRFLGTVVK…QRGKIYLDKV (70 aa)). The disordered stretch occupies residues 722-786 (VRPEGAEGPA…SRPRRRTRHS (65 aa)). Residues 727–738 (AEGPAEAAATDR) are compositionally biased toward low complexity. A compositionally biased stretch (basic and acidic residues) spans 739 to 778 (PAGRDRGDRAPRDRGDRGDRERGSRGPDRGDGGEGGGESR).

It belongs to the polyribonucleotide nucleotidyltransferase family. The cofactor is Mg(2+).

It localises to the cytoplasm. The enzyme catalyses RNA(n+1) + phosphate = RNA(n) + a ribonucleoside 5'-diphosphate. In terms of biological role, involved in mRNA degradation. Catalyzes the phosphorolysis of single-stranded polyribonucleotides processively in the 3'- to 5'-direction. The protein is Polyribonucleotide nucleotidyltransferase of Salinispora arenicola (strain CNS-205).